We begin with the raw amino-acid sequence, 335 residues long: Syntaxin-18 (335 aa).

At 1-309 the chain is on the cytoplasmic side; that stretch reads MAVDITLLFR…EDIREAIKNN (309 aa). Composition is skewed to basic and acidic residues over residues 168 to 182 and 192 to 208; these read KLEP…ESTS and KDSE…EKIL. The disordered stretch occupies residues 168 to 226; sequence KLEPEPNTKTRESTSSEKVSQSPSKDSEENPATEERPEKILAETQPELGTWGDGKGEDE. The t-SNARE coiled-coil homology domain occupies 243-305; the sequence is IGEMNSLFDE…KEGNEDIREA (63 aa). The helical; Anchor for type IV membrane protein transmembrane segment at 310–330 threads the bilayer; the sequence is AGFRVWILFFLVMCSFSLLFL. Residues 331 to 335 are Vesicular-facing; that stretch reads DWYDS.

Belongs to the syntaxin family. Component of a SNARE complex consisting of STX18, USE1L, BNIP1/SEC20L, and SEC22B. RINT1/TIP20L and ZW10 are associated with the complex through interaction with BNIP1/SEC20L. Interacts directly with USE1L and BNIP1/SEC20L. In terms of tissue distribution, ubiquitous.

The protein localises to the endoplasmic reticulum membrane. Its subcellular location is the golgi apparatus membrane. In terms of biological role, syntaxin that may be involved in targeting and fusion of Golgi-derived retrograde transport vesicles with the ER. This is Syntaxin-18 (STX18) from Homo sapiens (Human).